The chain runs to 260 residues: Snake venom serine protease KN6 (260 aa).

The N-terminal stretch at 1 to 18 (MVLIRVLANLLILQLSYA) is a signal peptide. The propeptide occupies 19–24 (QKSSEL). The Peptidase S1 domain maps to 25 to 251 (VIGGDECNIN…HLDWIQSIIA (227 aa)). Intrachain disulfides connect Cys-31/Cys-165, Cys-100/Cys-258, Cys-144/Cys-212, Cys-176/Cys-191, and Cys-202/Cys-227. Catalysis depends on His-67, which acts as the Charge relay system. The N-linked (GlcNAc...) asparagine glycan is linked to Asn-105. The active-site Charge relay system is the Asp-112. A glycan (N-linked (GlcNAc...) asparagine) is linked at Asn-172. Ser-206 acts as the Charge relay system in catalysis. Asn-213 and Asn-255 each carry an N-linked (GlcNAc...) asparagine glycan.

The protein belongs to the peptidase S1 family. Snake venom subfamily. As to quaternary structure, monomer. Expressed by the venom gland.

The protein localises to the secreted. In terms of biological role, snake venom serine protease that may act in the hemostasis system of the prey. The polypeptide is Snake venom serine protease KN6 (Trimeresurus stejnegeri (Chinese green tree viper)).